The following is a 143-amino-acid chain: Transcription antitermination protein NusB (143 aa).

The protein belongs to the NusB family.

Involved in transcription antitermination. Required for transcription of ribosomal RNA (rRNA) genes. Binds specifically to the boxA antiterminator sequence of the ribosomal RNA (rrn) operons. The sequence is that of Transcription antitermination protein NusB from Buchnera aphidicola subsp. Acyrthosiphon pisum (strain APS) (Acyrthosiphon pisum symbiotic bacterium).